We begin with the raw amino-acid sequence, 1464 residues long: MFSFVDLRLLLLLAATALLTHGQEEGQVEGQDEDIPPITCVQNGLRYHDRDVWKPEPCRICVCDNGKVLCDDVICDETKNCPGAEVPEGECCPVCPDGSESPTDQETTGVEGPKGDTGPRGPRGPAGPPGRDGIPGQPGLPGPPGPPGPPGPPGLGGNFAPQLSYGYDEKSTGGISVPGPMGPSGPRGLPGPPGAPGPQGFQGPPGEPGEPGASGPMGPRGPPGPPGKNGDDGEAGKPGRPGERGPPGPQGARGLPGTAGLPGMKGHRGFSGLDGAKGDAGPAGPKGEPGSPGENGAPGQMGPRGLPGERGRPGAPGPAGARGNDGATGAAGPPGPTGPAGPPGFPGAVGAKGEAGPQGPRGSEGPQGVRGEPGPPGPAGAAGPAGNPGADGQPGAKGANGAPGIAGAPGFPGARGPSGPQGPGGPPGPKGNSGEPGAPGSKGDTGAKGEPGPVGVQGPPGPAGEEGKRGARGEPGPTGLPGPPGERGGPGSRGFPGADGVAGPKGPAGERGSPGPAGPKGSPGEAGRPGEAGLPGAKGLTGSPGSPGPDGKTGPPGPAGQDGRPGPPGPPGARGQAGVMGFPGPKGAAGEPGKAGERGVPGPPGAVGPAGKDGEAGAQGPPGPAGPAGERGEQGPAGSPGFQGLPGPAGPPGEAGKPGEQGVPGDLGAPGPSGARGERGFPGERGVQGPPGPAGPRGANGAPGNDGAKGDAGAPGAPGSQGAPGLQGMPGERGAAGLPGPKGDRGDAGPKGADGSPGKDGVRGLTGPIGPPGPAGAPGDKGESGPSGPAGPTGARGAPGDRGEPGPPGPAGFAGPPGADGQPGAKGEPGDAGAKGDAGPPGPAGPAGPPGPIGNVGAPGAKGARGSAGPPGATGFPGAAGRVGPPGPSGNAGPPGPPGPAGKEGGKGPRGETGPAGRPGEVGPPGPPGPAGEKGSPGADGPAGAPGTPGPQGIAGQRGVVGLPGQRGERGFPGLPGPSGEPGKQGPSGASGERGPPGPMGPPGLAGPPGESGREGAPGAEGSPGRDGSPGAKGDRGETGPAGPPGAPGAPGAPGPVGPAGKSGDRGETGPAGPAGPVGPVGARGPAGPQGPRGDKGETGEQGDRGIKGHRGFSGLQGPPGPPGSPGEQGPSGASGPAGPRGPPGSAGAPGKDGLNGLPGPIGPPGPRGRTGDAGPVGPPGPPGPPGPPGPPSAGFDFSFLPQPPQEKAHDGGRYYRADDANVVRDRDLEVDTTLKSLSQQIENIRSPEGSRKNPARTCRDLKMCHSDWKSGEYWIDPNQGCNLDAIKVFCNMETGETCVYPTQPSVAQKNWYISKNPKDKRHVWFGESMTDGFQFEYGGQGSDPADVAIQLTFLRLMSTEASQNITYHCKNSVAYMDQQTGNLKKALLLQGSNEIEIRAEGNSRFTYSVTVDGCTSHTGAWGKTVIEYKTTKTSRLPIIDVAPLDVGAPDQEFGFDVGPVCFL.

A signal peptide spans 1–22 (MFSFVDLRLLLLLAATALLTHG). The propeptide at 23–161 (QEEGQVEGQD…PPGLGGNFAP (139 aa)) is N-terminal propeptide. Residues 38–96 (ITCVQNGLRYHDRDVWKPEPCRICVCDNGKVLCDDVICDETKNCPGAEVPEGECCPVCP) form the VWFC domain. The segment at 98–1214 (GSESPTDQET…PQEKAHDGGR (1117 aa)) is disordered. The segment covering 138-153 (PGLPGPPGPPGPPGPP) has biased composition (pro residues). At Gln162 the chain carries Pyrrolidone carboxylic acid. The nonhelical region (N-terminal) stretch occupies residues 162 to 178 (QLSYGYDEKSTGGISVP). Lys170 is modified (allysine). The residue at position 171 (Ser171) is a Phosphoserine. The tract at residues 179–1192 (GPMGPSGPRG…PGPPGPPGPP (1014 aa)) is triple-helical region. 4-hydroxyproline occurs at positions 190, 193, 196, 205, 208, 211, 226, 241, 247, 256, and 262. A compositionally biased stretch (low complexity) spans 198–217 (PQGFQGPPGEPGEPGASGPM). Over residues 229 to 243 (NGDDGEAGKPGRPGE) the composition is skewed to basic and acidic residues. Lys265 carries the post-translational modification 5-hydroxylysine; alternate. Lys265 carries O-linked (Gal...) hydroxylysine; alternate glycosylation. Position 271 is a phosphoserine (Ser271). The span at 279 to 295 (DAGPAGPKGEPGSPGEN) shows a compositional bias: low complexity. A 4-hydroxyproline mark is found at Pro289, Pro292, Pro298, Pro307, and Pro313. A compositionally biased stretch (low complexity) spans 318-331 (PAGARGNDGATGAA). Pro residues predominate over residues 333-345 (PPGPTGPAGPPGF). Pro334, Pro343, Pro346, Pro373, Pro376, Pro388, Pro394, Pro403, Pro409, Pro412, and Pro427 each carry 4-hydroxyproline. Over residues 379-418 (AGAAGPAGNPGADGQPGAKGANGAPGIAGAPGFPGARGPS) the composition is skewed to low complexity. The residue at position 430 (Lys430) is a 5-hydroxylysine. Residues Pro436, Pro439, Pro451, Pro460, Pro475, Pro481, Pro490, and Pro496 each carry the 4-hydroxyproline modification. Over residues 448–457 (KGEPGPVGVQ) the composition is skewed to low complexity. Residues 485–494 (GERGGPGSRG) are compositionally biased toward gly residues. Position 505 is a 5-hydroxylysine (Lys505). Pro514, Pro523, Pro529, Pro535, Pro544, Pro547, Pro556, Pro565, Pro571, Pro583, Pro592, Pro601, Pro604, Pro622, Pro640, Pro646, Pro652, Pro658, Pro664, Pro670, Pro682, Pro691, Pro703, Pro715, Pro718, Pro724, Pro730, and Pro739 each carry 4-hydroxyproline. The span at 538 to 564 (KGLTGSPGSPGPDGKTGPPGPAGQDGR) shows a compositional bias: low complexity. Over residues 573 to 592 (ARGQAGVMGFPGPKGAAGEP) the composition is skewed to low complexity. Positions 634-661 (QGPAGSPGFQGLPGPAGPPGEAGKPGEQ) are enriched in low complexity. Positions 696 to 724 (PRGANGAPGNDGAKGDAGAPGAPGSQGAP) are enriched in low complexity. Positions 745–747 (RGD) match the Cell attachment site motif. Position 751 is a 5-hydroxylysine (Lys751). 4-hydroxyproline is present on residues Pro757, Pro772, and Pro778. Residues 784 to 798 (SGPSGPAGPTGARGA) are compositionally biased toward low complexity. A Phosphoserine modification is found at Ser787. 8 positions are modified to 4-hydroxyproline: Pro799, Pro805, Pro808, Pro817, Pro823, Pro841, Pro850, and Pro859. Residues 811–838 (AGFAGPPGADGQPGAKGEPGDAGAKGDA) are compositionally biased toward low complexity. Residues 840-852 (PPGPAGPAGPPGP) are compositionally biased toward pro residues. Residues 853–883 (IGNVGAPGAKGARGSAGPPGATGFPGAAGRV) show a composition bias toward low complexity. Lys862 is modified (5-hydroxylysine). Residues Pro871 and Pro877 each carry the 4-hydroxyproline modification. Position 885 is a 3-hydroxyproline (Pro885). 16 positions are modified to 4-hydroxyproline: Pro886, Pro895, Pro898, Pro919, Pro928, Pro937, Pro946, Pro964, Pro973, Pro976, Pro982, Pro997, Pro1003, Pro1009, Pro1018, and Pro1024. Residues 912 to 921 (ETGPAGRPGE) show a composition bias toward low complexity. The segment covering 931–955 (AGEKGSPGADGPAGAPGTPGPQGIA) has biased composition (low complexity). Pro residues predominate over residues 996 to 1006 (PPGPMGPPGLA). Residue Lys1033 is modified to 5-hydroxylysine. A compositionally biased stretch (pro residues) spans 1042-1057 (AGPPGAPGAPGAPGPV). 4-hydroxyproline is present on residues Pro1045, Pro1048, and Pro1051. Positions 1078-1092 (VGPVGARGPAGPQGP) are enriched in low complexity. Positions 1093 to 1095 (RGD) match the Cell attachment site motif. Residues 1093–1107 (RGDKGETGEQGDRGI) show a composition bias toward basic and acidic residues. A 5-hydroxylysine modification is found at Lys1096. At Lys1108 the chain carries 5-hydroxylysine; alternate. O-linked (Gal...) hydroxylysine; alternate glycosylation is present at Lys1108. 4-hydroxyproline is present on residues Pro1120, Pro1123, Pro1126, Pro1144, and Pro1159. Over residues 1126 to 1159 (PGEQGPSGASGPAGPRGPPGSAGAPGKDGLNGLP) the composition is skewed to low complexity. Pro1164 is subject to 3-hydroxyproline. 4-hydroxyproline is present on Pro1165. The span at 1177 to 1192 (VGPPGPPGPPGPPGPP) shows a compositional bias: pro residues. Pro1179 is modified (3-hydroxyproline). 4-hydroxyproline is present on Pro1180. Pro1182 carries the 3-hydroxyproline modification. 4-hydroxyproline is present on Pro1183. Pro1185 bears the 3-hydroxyproline mark. 4-hydroxyproline occurs at positions 1186, 1189, and 1192. Residues 1193 to 1218 (SAGFDFSFLPQPPQEKAHDGGRYYRA) are nonhelical region (C-terminal). An Allysine modification is found at Lys1208. A propeptide spans 1219 to 1464 (DDANVVRDRD…GFDVGPVCFL (246 aa)) (C-terminal propeptide). One can recognise a Fibrillar collagen NC1 domain in the interval 1229-1464 (LEVDTTLKSL…GFDVGPVCFL (236 aa)). Cystine bridges form between Cys1259-Cys1291, Cys1299-Cys1462, and Cys1370-Cys1415. Asp1277, Asn1279, Gln1280, Cys1282, and Asp1285 together coordinate Ca(2+). A glycan (N-linked (GlcNAc...) asparagine) is linked at Asn1365.

Belongs to the fibrillar collagen family. As to quaternary structure, trimers of one alpha 2(I) and two alpha 1(I) chains. Interacts with MRC2. Interacts with TRAM2. Interacts with MFAP4 in a Ca (2+)-dependent manner. In terms of processing, contains mostly 4-hydroxyproline. Proline residues at the third position of the tripeptide repeating unit (G-X-Y) are hydroxylated in some or all of the chains. Contains 3-hydroxyproline at a few sites. This modification occurs on the first proline residue in the sequence motif Gly-Pro-Hyp, where Hyp is 4-hydroxyproline. Post-translationally, lysine residues at the third position of the tripeptide repeating unit (G-X-Y) are 5-hydroxylated in some or all of the chains. In terms of processing, O-glycosylated on hydroxylated lysine residues. The O-linked glycan consists of a Glc-Gal disaccharide. Forms the fibrils of tendon, ligaments and bones. In bones the fibrils are mineralized with calcium hydroxyapatite.

The protein resides in the secreted. It is found in the extracellular space. Its subcellular location is the extracellular matrix. Its function is as follows. Type I collagen is a member of group I collagen (fibrillar forming collagen). The polypeptide is Collagen alpha-1(I) chain (COL1A1) (Homo sapiens (Human)).